Consider the following 812-residue polypeptide: Hyaluronate lyase HylB (812 aa).

A signal peptide (tat-type signal) is located at residues 1-32 (MFGTPSRRTFLTASALSAMALAASPTVTDAIA). Catalysis depends on residues asparagine 222, histidine 272, and tyrosine 281.

The protein belongs to the polysaccharide lyase 8 family. Post-translationally, predicted to be exported by the Tat system. The position of the signal peptide cleavage has been experimentally proven.

The protein resides in the secreted. It catalyses the reaction [hyaluronan](n) = n 3-(4-deoxy-beta-D-gluc-4-enuronosyl)-N-acetyl-D-glucosamine + H2O. Degrades hyaluronic acid (HA) exclusively into HA disaccharides (HA-2). Produced HA-2s confer anti-inflammatory properties leading to reduced immunopathology in the mouse model of acne. In Cutibacterium acnes (Propionibacterium acnes), this protein is Hyaluronate lyase HylB.